A 348-amino-acid chain; its full sequence is Histidinol-phosphate aminotransferase (348 aa).

The residue at position 210 (Lys210) is an N6-(pyridoxal phosphate)lysine.

Belongs to the class-II pyridoxal-phosphate-dependent aminotransferase family. Histidinol-phosphate aminotransferase subfamily. As to quaternary structure, homodimer. Pyridoxal 5'-phosphate serves as cofactor.

The catalysed reaction is L-histidinol phosphate + 2-oxoglutarate = 3-(imidazol-4-yl)-2-oxopropyl phosphate + L-glutamate. It participates in amino-acid biosynthesis; L-histidine biosynthesis; L-histidine from 5-phospho-alpha-D-ribose 1-diphosphate: step 7/9. The sequence is that of Histidinol-phosphate aminotransferase from Pseudomonas putida (strain W619).